The sequence spans 301 residues: Polyamine aminopropyltransferase (301 aa).

One can recognise a PABS domain in the interval 4–240; it reads WHWLLEWQTP…GLWGFVYGGV (237 aa). An S-methyl-5'-thioadenosine-binding site is contributed by glutamine 33. Positions 64 and 89 each coordinate spermidine. S-methyl-5'-thioadenosine is bound by residues aspartate 109 and 141 to 142; that span reads DG. The active-site Proton acceptor is the aspartate 159.

It belongs to the spermidine/spermine synthase family. Homodimer or homotetramer.

The protein localises to the cytoplasm. It catalyses the reaction S-adenosyl 3-(methylsulfanyl)propylamine + putrescine = S-methyl-5'-thioadenosine + spermidine + H(+). The protein operates within amine and polyamine biosynthesis; spermidine biosynthesis; spermidine from putrescine: step 1/1. Functionally, catalyzes the irreversible transfer of a propylamine group from the amino donor S-adenosylmethioninamine (decarboxy-AdoMet) to putrescine (1,4-diaminobutane) to yield spermidine. The chain is Polyamine aminopropyltransferase from Saccharolobus islandicus (strain Y.N.15.51 / Yellowstone #2) (Sulfolobus islandicus).